A 62-amino-acid chain; its full sequence is Photosystem II reaction center protein Z (62 aa).

The next 2 membrane-spanning stretches (helical) occupy residues S8–A28 and F41–I61.

Belongs to the PsbZ family. In terms of assembly, PSII is composed of 1 copy each of membrane proteins PsbA, PsbB, PsbC, PsbD, PsbE, PsbF, PsbH, PsbI, PsbJ, PsbK, PsbL, PsbM, PsbT, PsbY, PsbZ, Psb30/Ycf12, at least 3 peripheral proteins of the oxygen-evolving complex and a large number of cofactors. It forms dimeric complexes.

The protein resides in the plastid. Its subcellular location is the chloroplast thylakoid membrane. Functionally, may control the interaction of photosystem II (PSII) cores with the light-harvesting antenna, regulates electron flow through the 2 photosystem reaction centers. PSII is a light-driven water plastoquinone oxidoreductase, using light energy to abstract electrons from H(2)O, generating a proton gradient subsequently used for ATP formation. The sequence is that of Photosystem II reaction center protein Z from Chaetosphaeridium globosum (Charophycean green alga).